The chain runs to 688 residues: NADH-ubiquinone oxidoreductase 75 kDa subunit (688 aa).

One can recognise a 2Fe-2S ferredoxin-type domain in the interval 1–85 (MIIRFKINEI…DESIETEIDE (85 aa)). [2Fe-2S] cluster is bound by residues Cys-38, Cys-49, Cys-52, and Cys-66. Positions 85–124 (EILKAREGVMEFLLINHPLDCPICDQGGECDLQEQTLAYG) constitute a 4Fe-4S His(Cys)3-ligated-type domain. His-101, Cys-105, Cys-108, Cys-114, Cys-153, Cys-156, Cys-159, and Cys-204 together coordinate [4Fe-4S] cluster. Residues 223–279 (LKNIKGIDIFDTLLTPINYQVKGGEIFRILPRINDRINEEWITDKVRFHYESYKIIE) form the 4Fe-4S Mo/W bis-MGD-type domain.

Belongs to the complex I 75 kDa subunit family. In terms of assembly, complex I is composed of about 45 different subunits. It depends on [2Fe-2S] cluster as a cofactor. The cofactor is [4Fe-4S] cluster.

It localises to the mitochondrion inner membrane. The enzyme catalyses a ubiquinone + NADH + 5 H(+)(in) = a ubiquinol + NAD(+) + 4 H(+)(out). Functionally, core subunit of the mitochondrial membrane respiratory chain NADH dehydrogenase (Complex I) that is believed to belong to the minimal assembly required for catalysis. Complex I functions in the transfer of electrons from NADH to the respiratory chain. The immediate electron acceptor for the enzyme is believed to be ubiquinone. This is the largest subunit of complex I and it is a component of the iron-sulfur (IP) fragment of the enzyme. It may form part of the active site crevice where NADH is oxidized. The protein is NADH-ubiquinone oxidoreductase 75 kDa subunit (nad11) of Dictyostelium discoideum (Social amoeba).